The primary structure comprises 616 residues: Zinc metalloproteinase-disintegrin-like ecarin (616 aa).

The first 20 residues, 1 to 20 (MIQILLVIICLAVFPYQGCS), serve as a signal peptide directing secretion. The propeptide occupies 21–190 (IILGSGNVND…EPIKKTLGLI (170 aa)). Positions 201 to 397 (KFIELVVVVD…YNPKCILDPP (197 aa)) constitute a Peptidase M12B domain. Glutamate 204 serves as a coordination point for Ca(2+). N-linked (GlcNAc...) asparagine glycosylation is found at asparagine 219 and asparagine 261. Residue aspartate 288 coordinates Ca(2+). N-linked (GlcNAc...) asparagine glycosylation is found at asparagine 295 and asparagine 326. Intrachain disulfides connect cysteine 312/cysteine 392, cysteine 352/cysteine 376, and cysteine 354/cysteine 359. Histidine 337 contributes to the Zn(2+) binding site. The active site involves glutamate 338. The Zn(2+) site is built by histidine 341 and histidine 347. Positions 392, 407, 410, 412, 414, 417, and 420 each coordinate Ca(2+). The region spanning 405 to 491 (PAVCGNEIWE…ECPRNEFQRN (87 aa)) is the Disintegrin domain. 14 disulfides stabilise this stretch: cysteine 408–cysteine 437, cysteine 419–cysteine 432, cysteine 421–cysteine 427, cysteine 431–cysteine 454, cysteine 445–cysteine 451, cysteine 450–cysteine 476, cysteine 463–cysteine 483, cysteine 470–cysteine 502, cysteine 495–cysteine 507, cysteine 514–cysteine 567, cysteine 529–cysteine 578, cysteine 542–cysteine 555, cysteine 562–cysteine 604, and cysteine 598–cysteine 609. A D/ECD-tripeptide motif is present at residues 469-471 (DCD). The Ca(2+) site is built by aspartate 471, valine 472, and asparagine 486. Residue asparagine 497 is glycosylated (N-linked (GlcNAc...) asparagine).

Belongs to the venom metalloproteinase (M12B) family. P-III subfamily. P-IIIa sub-subfamily. As to quaternary structure, monomer. The cofactor is Zn(2+). In terms of tissue distribution, expressed by the venom gland.

It localises to the secreted. Its function is as follows. Snake venom zinc metalloproteinase that catalyzes the conversion of prothrombin (F2) to alpha-thrombin through formation of a thrombin intermediate, thereby functioning as a procoagulant protein. Has a low Km for prothrombin and a high kcat. Cleaves the 320-Arg-Ile-321 bond in prothrombin and produces meizothrombin which is ultimately converted to alpha-thrombin by autolysis. This chain is Zinc metalloproteinase-disintegrin-like ecarin, found in Echis carinatus (Saw-scaled viper).